The sequence spans 665 residues: Long chain acyl-CoA synthetase 2 (665 aa).

228–239 contacts ATP; it reads IMYTSGTTGEPK. Residues 496-520 form a fatty acid-binding region; the sequence is DGWFHTGDIGEWQEDGSMKIIDRKK.

It belongs to the ATP-dependent AMP-binding enzyme family. It depends on Mg(2+) as a cofactor. As to expression, expressed along the entire length of the stem, but expression was not entirely epidermal specific, with some expression found in internal cell layers as well. Was expressed in leave epidermal cells, flowers (sepals, petals, stamens, filaments and carpel), siliques and developing seeds. In roots, expression was detected in an internal cell layer, probably the endodermal layer.

It is found in the endoplasmic reticulum. It catalyses the reaction a long-chain fatty acid + ATP + CoA = a long-chain fatty acyl-CoA + AMP + diphosphate. Its pathway is lipid metabolism; fatty acid metabolism. Its function is as follows. Activation of long-chain fatty acids for both synthesis of cellular lipids, and degradation via beta-oxidation. Acts in the cutin pathway. Preferentially uses palmitate, palmitoleate, oleate and linoleate. Required for repression of lateral root formation through its role in cutin biosynthesis and subsequent aerial tissues permeability. This chain is Long chain acyl-CoA synthetase 2 (LACS2), found in Arabidopsis thaliana (Mouse-ear cress).